Here is a 416-residue protein sequence, read N- to C-terminus: E3 ubiquitin-protein ligase makorin-2 (416 aa).

2 consecutive C3H1-type zinc fingers follow at residues 2 to 29 and 31 to 58; these read STKQITCRYFMHGVCREGSQCLFSHDLA and SKPSTICKYYQKGYCAYGTRCRYDHTRP. The span at 113 to 122 shows a compositional bias: basic and acidic residues; that stretch reads NLSGMAERKT. The interval 113 to 142 is disordered; sequence NLSGMAERKTQPSMVSNPGSCSDPQPSPEM. The segment covering 123–136 has biased composition (polar residues); sequence QPSMVSNPGSCSDP. Serine 139 carries the post-translational modification Phosphoserine. The segment at 165 to 192 adopts a C3H1-type 3 zinc-finger fold; it reads SNEQQLCPYAAAGECRFGDACVYLHGEV. A makorin-type Cys-His region spans residues 193-222; it reads CEICRLQVLHPFDPEQRKAHEKICMLTFEH. The RING-type zinc-finger motif lies at 238 to 292; the sequence is CSICMEVILEKASASERRFGILSNCNHTYCLSCIRQWRCAKQFENPIIKSCPECR. The C3H1-type 4 zinc finger occupies 321–350; sequence GMGKKACKYFEQGKGTCPFGSKCLYRHAYP.

Interacts with PDLIM2 (via LIM zinc-binding domain). Interacts with RELA. As to expression, expressed in sperm, with significantly reduced expression in sperm of patients with oligoasthenoteratozoospermia (at protein level). Widely expressed with expression in testis, ovary, small intestine, colon, peripheral blood leukocytes, fetal liver, bone marrow, thymus, lymph node and spleen.

It localises to the cytoplasm. Its subcellular location is the nucleus. It catalyses the reaction S-ubiquitinyl-[E2 ubiquitin-conjugating enzyme]-L-cysteine + [acceptor protein]-L-lysine = [E2 ubiquitin-conjugating enzyme]-L-cysteine + N(6)-ubiquitinyl-[acceptor protein]-L-lysine.. Its pathway is protein modification; protein ubiquitination. Its function is as follows. E3 ubiquitin ligase catalyzing the covalent attachment of ubiquitin moieties onto substrate proteins. Promotes the polyubiquitination and proteasome-dependent degradation of RELA/p65, thereby suppressing RELA-mediated NF-kappaB transactivation and negatively regulating inflammatory responses. Plays a role in the regulation of spermiation and in male fertility. This chain is E3 ubiquitin-protein ligase makorin-2 (MKRN2), found in Homo sapiens (Human).